Reading from the N-terminus, the 180-residue chain is MTTSRRPSPRIRSFVKDLSATIPGAFRFTRGHYSMEELAREAIIRGADRIVVVGERRGNPGIIRVYAVEGPERPDNIVSFIVKGVSLSRERRWGLPSLRGGEVLVARPLDSGVAVEFADAFVIAFHARLKPPEAAGYVEAVIESLDARTVAVTFRYGGAPVGPMLRLGKPAEMVKRGRRV.

The 178-residue stretch at 1–178 (MTTSRRPSPR…KPAEMVKRGR (178 aa)) folds into the Brix domain.

Its function is as follows. Probably involved in the biogenesis of the ribosome. This is Probable Brix domain-containing ribosomal biogenesis protein from Aeropyrum pernix (strain ATCC 700893 / DSM 11879 / JCM 9820 / NBRC 100138 / K1).